Reading from the N-terminus, the 145-residue chain is Protein FimA (145 aa).

It belongs to the fimbrial protein family.

It is found in the fimbrium. The sequence is that of Protein FimA (fimA) from Bordetella pertussis.